A 602-amino-acid chain; its full sequence is RecBCD enzyme subunit RecD (602 aa).

ATP is bound at residue 171-178; the sequence is GGPGTGKT.

It belongs to the RecD family. As to quaternary structure, heterotrimer of RecB, RecC and RecD. All subunits contribute to DNA-binding.

It carries out the reaction Couples ATP hydrolysis with the unwinding of duplex DNA at the replication fork by translocating in the 5'-3' direction. This creates two antiparallel DNA single strands (ssDNA). The leading ssDNA polymer is the template for DNA polymerase III holoenzyme which synthesizes a continuous strand.. The enzyme catalyses ATP + H2O = ADP + phosphate + H(+). In terms of biological role, a helicase/nuclease that prepares dsDNA breaks (DSB) for recombinational DNA repair. Binds to DSBs and unwinds DNA via a highly rapid and processive ATP-dependent bidirectional helicase activity. Unwinds dsDNA until it encounters a Chi (crossover hotspot instigator) sequence from the 3' direction. Cuts ssDNA a few nucleotides 3' to the Chi site. The properties and activities of the enzyme are changed at Chi. The Chi-altered holoenzyme produces a long 3'-ssDNA overhang and facilitates RecA-binding to the ssDNA for homologous DNA recombination and repair. Holoenzyme degrades any linearized DNA that is unable to undergo homologous recombination. In the holoenzyme this subunit has ssDNA-dependent ATPase and 5'-3' helicase activity. When added to pre-assembled RecBC greatly stimulates nuclease activity and augments holoenzyme processivity. Negatively regulates the RecA-loading ability of RecBCD. This Buchnera aphidicola subsp. Acyrthosiphon pisum (strain APS) (Acyrthosiphon pisum symbiotic bacterium) protein is RecBCD enzyme subunit RecD.